A 231-amino-acid polypeptide reads, in one-letter code: UMP-CMP kinase (231 aa).

Position 57 to 62 (Gly57 to Thr62) interacts with ATP. Residues Ser77 to Val106 form an NMP region. A ribonucleoside 5'-phosphate contacts are provided by residues Arg83, Lys104–Val106, and Gly131–Arg134. CMP is bound at residue Asn138. The tract at residues Asn169 to Asp177 is LID. Arg170 lines the ATP pocket. Positions 174 and 185 each coordinate a ribonucleoside 5'-phosphate. Residue Gly213 participates in ATP binding.

This sequence belongs to the adenylate kinase family. UMP-CMP kinase subfamily. Monomer. Mg(2+) serves as cofactor.

It localises to the cytoplasm. It is found in the nucleus. The enzyme catalyses CMP + ATP = CDP + ADP. It catalyses the reaction dCMP + ATP = dCDP + ADP. The catalysed reaction is UMP + ATP = UDP + ADP. Catalyzes the phosphorylation of pyrimidine nucleoside monophosphates at the expense of ATP. Plays an important role in de novo pyrimidine nucleotide biosynthesis. Has preference for UMP and CMP as phosphate acceptors. The protein is UMP-CMP kinase of Prunus armeniaca (Apricot).